The following is a 334-amino-acid chain: tRNA uridine(34) hydroxylase (334 aa).

The Rhodanese domain occupies 123-217 (SDPDVILVDT…YLEEVKQEES (95 aa)). C177 acts as the Cysteine persulfide intermediate in catalysis.

Belongs to the TrhO family.

The enzyme catalyses uridine(34) in tRNA + AH2 + O2 = 5-hydroxyuridine(34) in tRNA + A + H2O. Its function is as follows. Catalyzes oxygen-dependent 5-hydroxyuridine (ho5U) modification at position 34 in tRNAs. The polypeptide is tRNA uridine(34) hydroxylase (Shewanella putrefaciens (strain CN-32 / ATCC BAA-453)).